The chain runs to 894 residues: Sorting nexin-14 (894 aa).

Positions 78–252 constitute a PXA domain; it reads SSKVDASLSE…LLIIFIDDSP (175 aa). The RGS domain maps to 284 to 416; that stretch reads ELKQIREQQD…CHSDEYFRQL (133 aa). Position 496 is a phosphoserine (Ser496). The PX domain occupies 518 to 638; the sequence is PYVDFFEDPS…DFLSPNGGET (121 aa).

This sequence belongs to the sorting nexin family.

The protein resides in the cytoplasm. It localises to the cell projection. It is found in the dendrite. Its function is as follows. Plays a role in maintaining normal neuronal excitability and synaptic transmission. May be involved in several stages of intracellular trafficking. The protein is Sorting nexin-14 (SNX14) of Pongo abelii (Sumatran orangutan).